Here is a 208-residue protein sequence, read N- to C-terminus: Urease accessory protein UreG 1 (208 aa).

Gly14–Thr21 serves as a coordination point for GTP.

It belongs to the SIMIBI class G3E GTPase family. UreG subfamily. In terms of assembly, homodimer. UreD, UreF and UreG form a complex that acts as a GTP-hydrolysis-dependent molecular chaperone, activating the urease apoprotein by helping to assemble the nickel containing metallocenter of UreC. The UreE protein probably delivers the nickel.

It is found in the cytoplasm. Facilitates the functional incorporation of the urease nickel metallocenter. This process requires GTP hydrolysis, probably effectuated by UreG. This Brucella ovis (strain ATCC 25840 / 63/290 / NCTC 10512) protein is Urease accessory protein UreG 1.